A 337-amino-acid chain; its full sequence is GTP 3',8-cyclase (337 aa).

A Radical SAM core domain is found at 17–242 (AFQRRYYYLR…QSKGLLDGPA (226 aa)). R26 is a binding site for GTP. Residues C33 and C37 each contribute to the [4Fe-4S] cluster site. Y39 contributes to the S-adenosyl-L-methionine binding site. [4Fe-4S] cluster is bound at residue C40. R76 lines the GTP pocket. G80 serves as a coordination point for S-adenosyl-L-methionine. T107 contributes to the GTP binding site. S131 lines the S-adenosyl-L-methionine pocket. Position 168 (K168) interacts with GTP. Residue M202 coordinates S-adenosyl-L-methionine. Residues C265 and C268 each coordinate [4Fe-4S] cluster. 270 to 272 (RLR) is a GTP binding site. Residue C282 coordinates [4Fe-4S] cluster.

The protein belongs to the radical SAM superfamily. MoaA family. As to quaternary structure, monomer and homodimer. [4Fe-4S] cluster serves as cofactor.

It carries out the reaction GTP + AH2 + S-adenosyl-L-methionine = (8S)-3',8-cyclo-7,8-dihydroguanosine 5'-triphosphate + 5'-deoxyadenosine + L-methionine + A + H(+). Its pathway is cofactor biosynthesis; molybdopterin biosynthesis. Catalyzes the cyclization of GTP to (8S)-3',8-cyclo-7,8-dihydroguanosine 5'-triphosphate. This Pasteurella multocida (strain Pm70) protein is GTP 3',8-cyclase.